The primary structure comprises 204 residues: Small ribosomal subunit protein uS3 (204 aa).

In terms of domain architecture, KH type-2 spans 37 to 105 (IRSYINESFK…NVEVNVVGVK (69 aa)).

It belongs to the universal ribosomal protein uS3 family. Part of the 30S ribosomal subunit. Forms a tight complex with proteins S10 and S14.

Its function is as follows. Binds the lower part of the 30S subunit head. Binds mRNA in the 70S ribosome, positioning it for translation. In Wolbachia pipientis wMel, this protein is Small ribosomal subunit protein uS3.